Consider the following 307-residue polypeptide: Aspartate carbamoyltransferase catalytic subunit (307 aa).

Arg58 and Thr59 together coordinate carbamoyl phosphate. Lys86 is a binding site for L-aspartate. The carbamoyl phosphate site is built by Arg108, His136, and Gln139. Residues Arg169 and Arg223 each coordinate L-aspartate. Gly264 and Pro265 together coordinate carbamoyl phosphate.

Belongs to the aspartate/ornithine carbamoyltransferase superfamily. ATCase family. Heterododecamer (2C3:3R2) of six catalytic PyrB chains organized as two trimers (C3), and six regulatory PyrI chains organized as three dimers (R2).

The enzyme catalyses carbamoyl phosphate + L-aspartate = N-carbamoyl-L-aspartate + phosphate + H(+). Its pathway is pyrimidine metabolism; UMP biosynthesis via de novo pathway; (S)-dihydroorotate from bicarbonate: step 2/3. Catalyzes the condensation of carbamoyl phosphate and aspartate to form carbamoyl aspartate and inorganic phosphate, the committed step in the de novo pyrimidine nucleotide biosynthesis pathway. This is Aspartate carbamoyltransferase catalytic subunit from Syntrophus aciditrophicus (strain SB).